The sequence spans 363 residues: Flagellar P-ring protein 2 (363 aa).

The first 18 residues, 1–18, serve as a signal peptide directing secretion; it reads MLIRLLLLVICLAGPGVA.

It belongs to the FlgI family. As to quaternary structure, the basal body constitutes a major portion of the flagellar organelle and consists of four rings (L,P,S, and M) mounted on a central rod.

The protein localises to the periplasm. It localises to the bacterial flagellum basal body. In terms of biological role, assembles around the rod to form the L-ring and probably protects the motor/basal body from shearing forces during rotation. In Cereibacter sphaeroides (strain ATCC 17023 / DSM 158 / JCM 6121 / CCUG 31486 / LMG 2827 / NBRC 12203 / NCIMB 8253 / ATH 2.4.1.) (Rhodobacter sphaeroides), this protein is Flagellar P-ring protein 2.